We begin with the raw amino-acid sequence, 1273 residues long: Inverted formin-2 (1273 aa).

Disordered regions lie at residues Met-1 to Leu-30, Gly-346 to Pro-387, Leu-427 to Gly-559, Asn-960 to Lys-999, and Lys-1021 to Gln-1273. The residue at position 2 (Ser-2) is an N-acetylserine. Positions Ser-2 to Gln-330 constitute a GBD/FH3 domain. Phosphoserine is present on Ser-351. Positions Ser-359–Val-382 are enriched in low complexity. The region spanning Pro-421–Ser-564 is the FH1 domain. 2 stretches are compositionally biased toward pro residues: residues Val-433 to Ser-516 and Gln-524 to Pro-558. Residues His-589–Glu-979 form the FH2 domain. Residues Glu-907 to Arg-984 adopt a coiled-coil conformation. Residues Asp-1007–Thr-1022 form the WH2 domain. The segment covering Ala-1047–Pro-1059 has biased composition (polar residues). A compositionally biased stretch (basic and acidic residues) spans Ser-1088–Ser-1101. Residues Ser-1172 and Ser-1174 each carry the phosphoserine modification. Positions Gly-1195 to Ala-1204 are enriched in acidic residues. A Phosphothreonine modification is found at Thr-1203. Ser-1216 and Ser-1218 each carry phosphoserine. Residues Thr-1223 and Thr-1230 each carry the phosphothreonine modification. Positions Thr-1242–Ser-1251 are enriched in basic residues.

It belongs to the formin homology family. In terms of assembly, interacts with profilin and actin at the FH1 and FH2 domains respectively. Interacts with DAAM2.

It localises to the cytoplasm. The protein localises to the perinuclear region. Phosphate inhibits both the depolymerization and severing activities. Its function is as follows. Severs actin filaments and accelerates their polymerization and depolymerization. The chain is Inverted formin-2 (Inf2) from Mus musculus (Mouse).